Consider the following 338-residue polypeptide: Lipoate-protein ligase A (338 aa).

The BPL/LPL catalytic domain maps to 29-216 (PATQRVLFLW…AFFEHYSERV (188 aa)). ATP-binding positions include Arg-71, 76-79 (GAVF), and Lys-134. Lys-134 provides a ligand contact to (R)-lipoate.

It belongs to the LplA family. Monomer.

The protein localises to the cytoplasm. The enzyme catalyses L-lysyl-[lipoyl-carrier protein] + (R)-lipoate + ATP = N(6)-[(R)-lipoyl]-L-lysyl-[lipoyl-carrier protein] + AMP + diphosphate + H(+). It participates in protein modification; protein lipoylation via exogenous pathway; protein N(6)-(lipoyl)lysine from lipoate: step 1/2. Its pathway is protein modification; protein lipoylation via exogenous pathway; protein N(6)-(lipoyl)lysine from lipoate: step 2/2. In terms of biological role, catalyzes both the ATP-dependent activation of exogenously supplied lipoate to lipoyl-AMP and the transfer of the activated lipoyl onto the lipoyl domains of lipoate-dependent enzymes. The chain is Lipoate-protein ligase A from Enterobacter sp. (strain 638).